The primary structure comprises 368 residues: Probable staphylococcal-like nuclease CAN2 (368 aa).

Residue Gly-2 is the site of N-myristoyl glycine attachment. The S-palmitoyl cysteine moiety is linked to residue Cys-7. Residues 16-56 (DHYPYYKPTSRPHYQPPHYHGQPAAPPAPLQQQHLGPHGVT) are disordered. Residues 27–38 (PHYQPPHYHGQP) show a composition bias toward low complexity. A TNase-like domain is found at 168–344 (NTLPVYDKCI…RAANRGLWAS (177 aa)). Residue Asp-181 coordinates Ca(2+). The active site involves Arg-251. A Ca(2+)-binding site is contributed by Asp-256. Residues Glu-259 and Arg-293 contribute to the active site.

This sequence belongs to the thermonuclease family. Requires Ca(2+) as cofactor.

The protein resides in the cell membrane. In terms of biological role, enzyme that catalyzes the hydrolysis of both DNA and RNA at the 5' position of the phosphodiester bond. The protein is Probable staphylococcal-like nuclease CAN2 of Oryza sativa subsp. japonica (Rice).